The primary structure comprises 435 residues: MSTGFFGDIQKVRYEGPESDNPLAFRHYNADEIVLGKRMEDHLRFAVAYWHSFAWEGGDPFGGRPFDRPWFSNEIDAAKLKADVAFEFFSLLGAPYYCFHDADVRPEGRNFAENTRYLNEIVDIFEKKQAETGMKLLWGTANLFSNRRYMAGAATNPDPDVFAFAAATVKTCIDATKRLGGENYVLWGGREGYETLLNTDLSRELDHMGRFLSLVVEYKHKIGFKGTILIEPKPQEPTKHQYDYDVATVYGFLKRYGLENEVKVNIEQGHAILAGHSFEHELALARTLGIFGSIDMNRNDYQSGWDTDQFPNNVPEMALAYYQVLLAGGFTTGGTNFDAKLRRQSLDPQDLLIGHIGGMDCCARGLKAAARMLEDGALSKPLDERYAGWNGEFGKRLLSGLSLDQIAGEVEAKDINPQPKSGRQEYLENIVNRYV.

Residues histidine 100 and aspartate 103 contribute to the active site. Mg(2+)-binding residues include glutamate 231, glutamate 267, histidine 270, aspartate 295, aspartate 306, aspartate 308, and aspartate 338.

It belongs to the xylose isomerase family. As to quaternary structure, homotetramer. The cofactor is Mg(2+).

It localises to the cytoplasm. It catalyses the reaction alpha-D-xylose = alpha-D-xylulofuranose. This Brucella canis (strain ATCC 23365 / NCTC 10854 / RM-666) protein is Xylose isomerase.